The following is a 63-amino-acid chain: Large ribosomal subunit protein bL28 (63 aa).

The segment covering 11 to 20 has biased composition (polar residues); it reads GNNSGASVSH. A disordered region spans residues 11-30; it reads GNNSGASVSHSNKKTKRKWK. The segment covering 21–30 has biased composition (basic residues); that stretch reads SNKKTKRKWK.

This sequence belongs to the bacterial ribosomal protein bL28 family.

This chain is Large ribosomal subunit protein bL28, found in Natranaerobius thermophilus (strain ATCC BAA-1301 / DSM 18059 / JW/NM-WN-LF).